The chain runs to 156 residues: MSPLVAVLVFFSAALGVPGPGVAGNPRGLDAIFEAPVTPAPPTRHPRREELEWDDEDHPLLDLEPPVGSRCHPYIAYSLPPDMNAVTSVVVKPYCSPPEVILWASGTAYLVNPFVAIQALAVGEPLNEAALKELGEVAVHKDSLPPLRYNGGPPAE.

The signal sequence occupies residues 1-16; it reads MSPLVAVLVFFSAALG. The gL alphaherpesvirus-type domain occupies 50–156; it reads ELEWDDEDHP…LRYNGGPPAE (107 aa). An intrachain disulfide couples C71 to C95.

Belongs to the herpesviridae glycoprotein L (gL) family. Alphaherpesvirinae gL subfamily. As to quaternary structure, interacts with glycoprotein H (gH); this interaction is necessary for the correct processing and cell surface expression of gH. The heterodimer gH/gL seems to interact with gB trimers during fusion. In terms of processing, O-glycosylated, and sialylated.

It localises to the virion membrane. Its subcellular location is the host cell membrane. The protein resides in the host Golgi apparatus. It is found in the host trans-Golgi network. The heterodimer glycoprotein H-glycoprotein L is required for the fusion of viral and plasma membranes leading to virus entry into the host cell. Acts as a functional inhibitor of gH and maintains gH in an inhibited form. Upon binding to host integrins, gL dissociates from gH leading to activation of the viral fusion glycoproteins gB and gH. The polypeptide is Envelope glycoprotein L (Suid herpesvirus 1 (strain Indiana-Funkhauser / Becker) (SuHV-1)).